Here is a 378-residue protein sequence, read N- to C-terminus: Mannitol-1-phosphate 5-dehydrogenase (378 aa).

4–15 (SVHFGAGNIGRG) contributes to the NAD(+) binding site.

The protein belongs to the mannitol dehydrogenase family.

The catalysed reaction is D-mannitol 1-phosphate + NAD(+) = beta-D-fructose 6-phosphate + NADH + H(+). The protein is Mannitol-1-phosphate 5-dehydrogenase of Streptococcus pneumoniae (strain ATCC 700669 / Spain 23F-1).